The following is a 456-amino-acid chain: Chromosomal replication initiator protein DnaA (456 aa).

Residues 1–73 (MEIYLDNLWD…ADVVHDILGY (73 aa)) form a domain I, interacts with DnaA modulators region. The tract at residues 73–117 (YPVEIYLTTFLVEDSRKNDSGLIWSEHKSVNILGENLSIPKPLPA) is domain II. The domain III, AAA+ region stretch occupies residues 118-334 (NLNAKYMFSR…GALTRVVTYI (217 aa)). Residues Gly-162, Gly-164, Lys-165, and Thr-166 each contribute to the ATP site. Positions 335–456 (SISGLPMTVE…SDRINFSSRH (122 aa)) are domain IV, binds dsDNA.

Belongs to the DnaA family. Oligomerizes as a right-handed, spiral filament on DNA at oriC.

It is found in the cytoplasm. Plays an essential role in the initiation and regulation of chromosomal replication. ATP-DnaA binds to the origin of replication (oriC) to initiate formation of the DNA replication initiation complex once per cell cycle. Binds the DnaA box (a 9 base pair repeat at the origin) and separates the double-stranded (ds)DNA. Forms a right-handed helical filament on oriC DNA; dsDNA binds to the exterior of the filament while single-stranded (ss)DNA is stabiized in the filament's interior. The ATP-DnaA-oriC complex binds and stabilizes one strand of the AT-rich DNA unwinding element (DUE), permitting loading of DNA polymerase. After initiation quickly degrades to an ADP-DnaA complex that is not apt for DNA replication. Binds acidic phospholipids. This is Chromosomal replication initiator protein DnaA from Trichodesmium erythraeum (strain IMS101).